Here is a 346-residue protein sequence, read N- to C-terminus: Nuclear distribution protein nudE-like 1 (346 aa).

Residues 13–190 are a coiled coil; that stretch reads KEEIVYWREL…LAVRERQTNG (178 aa). 2 disordered regions span residues 184-205 and 325-346; these read RERQ…DCDK and YDPP…PLSV. The segment covering 188–200 has biased composition (polar residues); sequence TNGTRKSAPSSPT. Over residues 335–346 the composition is skewed to pro residues; the sequence is PPSPPGMLPLSV.

It belongs to the nudE family. Phosphorylated in mitosis.

It localises to the cytoplasm. The protein resides in the cytoskeleton. The protein localises to the microtubule organizing center. It is found in the centrosome. Its subcellular location is the spindle. Required for organization of the cellular microtubule array and microtubule anchoring at the centrosome. Positively regulates the activity of the minus-end directed microtubule motor protein dynein. May enhance dynein-mediated microtubule sliding by targeting dynein to the microtubule plus end. Positively regulates lysosome peripheral distribution and ruffled border formation in osteoclasts. The sequence is that of Nuclear distribution protein nudE-like 1 (ndel1) from Xenopus tropicalis (Western clawed frog).